The following is a 487-amino-acid chain: 3-octaprenyl-4-hydroxybenzoate carboxy-lyase (487 aa).

Position 172 (Asn-172) interacts with Mn(2+). Residues 175–177 (IYR), 189–191 (RWL), and 194–195 (RG) contribute to the prenylated FMN site. Glu-238 serves as a coordination point for Mn(2+). The Proton donor role is filled by Asp-287.

This sequence belongs to the UbiD family. Homohexamer. The cofactor is prenylated FMN. Requires Mn(2+) as cofactor.

It is found in the cell membrane. The catalysed reaction is a 4-hydroxy-3-(all-trans-polyprenyl)benzoate + H(+) = a 2-(all-trans-polyprenyl)phenol + CO2. Its pathway is cofactor biosynthesis; ubiquinone biosynthesis. Its function is as follows. Catalyzes the decarboxylation of 3-octaprenyl-4-hydroxy benzoate to 2-octaprenylphenol, an intermediate step in ubiquinone biosynthesis. This Nitrosospira multiformis (strain ATCC 25196 / NCIMB 11849 / C 71) protein is 3-octaprenyl-4-hydroxybenzoate carboxy-lyase.